The sequence spans 480 residues: Initiation-specific alpha-1,6-mannosyltransferase (480 aa).

Topologically, residues 1-15 are cytoplasmic; that stretch reads MSRKLSHLIATRKSK. A helical; Signal-anchor for type II membrane protein membrane pass occupies residues 16-30; sequence TIVVTVLLIYSLLTF. The Lumenal portion of the chain corresponds to 31–480; it reads HLSNKRLLSQ…EDADKNAGHK (450 aa). Residues 187-189 carry the DXD motif motif; that stretch reads DMD. Asn203, Asn281, Asn341, and Asn393 each carry an N-linked (GlcNAc...) asparagine glycan.

It belongs to the glycosyltransferase 32 family. Mn(2+) is required as a cofactor. Post-translationally, glycosylated.

The protein resides in the endoplasmic reticulum membrane. The protein localises to the golgi apparatus membrane. The catalysed reaction is Transfers an alpha-D-mannosyl residue from GDP-mannose into lipid-linked oligosaccharide, forming an alpha-(1-&gt;6)-D-mannosyl-D-mannose linkage.. Its function is as follows. Mannosyltransferase involved in outer chain elongation of asparagine-linked oligosaccharides of the type Man(9)GlcNAc(2). Adds the first alpha-1,6-mannose to the Man(8)GlcNAc(2) and Man(9)GlcNAc(2), but not Man(5)GlcNAc(2), endoplasmic reticulum intermediates. Represents the first enzymatic event required for synthesis of outer chain mannose linkages on yeast secretory proteins. Also has the potential to transfer a second alpha-1,6-mannose to the Man(8)GlcNAc(2) core oligosaccharide. The chain is Initiation-specific alpha-1,6-mannosyltransferase from Saccharomyces cerevisiae (strain ATCC 204508 / S288c) (Baker's yeast).